Consider the following 480-residue polypeptide: Pyruvate kinase II (480 aa).

A substrate-binding site is contributed by Arg36. Residues Asn38, Ser40, and Asp70 each coordinate K(+). 38–41 (NFSH) lines the ATP pocket. Positions 77 and 160 each coordinate ATP. A substrate-binding site is contributed by Lys223. A Mg(2+)-binding site is contributed by Glu225. The substrate site is built by Gly251, Asp252, and Thr284. Mg(2+) is bound at residue Asp252.

The protein belongs to the pyruvate kinase family. Homotetramer. The cofactor is Mg(2+). K(+) serves as cofactor.

It catalyses the reaction pyruvate + ATP = phosphoenolpyruvate + ADP + H(+). It participates in carbohydrate degradation; glycolysis; pyruvate from D-glyceraldehyde 3-phosphate: step 5/5. Allosterically activated by AMP and by several sugar phosphates. Belongs to type II PK. Functionally, catalyzes the formation of pyruvate in the last step of glycolysis, it is irreversible under physiological conditions. The reaction is critical for the control of metabolic flux in the second part of glycolysis. The sequence is that of Pyruvate kinase II (pykA) from Salmonella typhimurium (strain LT2 / SGSC1412 / ATCC 700720).